The chain runs to 313 residues: NADH-ubiquinone oxidoreductase chain 1 (313 aa).

Transmembrane regions (helical) follow at residues 5–25, 75–95, 104–124, 151–171, 175–195, 227–247, 251–271, and 293–313; these read LFMF…SVAF, FLYY…WVIF, FPYG…FMIA, LALI…LYFM, LYCW…GSSL, LIFL…SLIF, DFYS…FVWV, and PLSL…FSII.

This sequence belongs to the complex I subunit 1 family.

The protein resides in the mitochondrion inner membrane. The enzyme catalyses a ubiquinone + NADH + 5 H(+)(in) = a ubiquinol + NAD(+) + 4 H(+)(out). In terms of biological role, core subunit of the mitochondrial membrane respiratory chain NADH dehydrogenase (Complex I) that is believed to belong to the minimal assembly required for catalysis. Complex I functions in the transfer of electrons from NADH to the respiratory chain. The immediate electron acceptor for the enzyme is believed to be ubiquinone. In Locusta migratoria (Migratory locust), this protein is NADH-ubiquinone oxidoreductase chain 1 (ND1).